Consider the following 348-residue polypeptide: MAGKADLGHTGISDNIVERQIFVPQPNNAWSFTQGLMCGQASVVVVLLVFIKFFVFSEAPPSSGAAKSKKKDISGVIVKREAKNTDDDDGVENGDSAKLATILEKTYYDVNNHNPESLDWFNVLIAQTISQLRCEALLSDNIYHSLNDFLETSDLPDFMDKITLTEIDIGDDFPIFSNCRIQHSADGTGRLEAKIDVDLSDTLTLGIETRLLLNHPRPLTAVLPVQLTVSMVRFSGCLTVSLVNTNDTDFVGTSKEENSSGGGTALMFSFSPDYRLEFSVKSLIGSRTKLQDVPKISDLVDSKLRNWFSDRCVEPKFQVVRLPSMWPRSKNTREPVGAGKTEKVNGNE.

Residues 1-35 (MAGKADLGHTGISDNIVERQIFVPQPNNAWSFTQG) lie on the Lumenal side of the membrane. The chain crosses the membrane as a helical span at residues 36 to 56 (LMCGQASVVVVLLVFIKFFVF). At 57–348 (SEAPPSSGAA…GKTEKVNGNE (292 aa)) the chain is on the cytoplasmic side. The 210-residue stretch at 114–323 (NPESLDWFNV…EPKFQVVRLP (210 aa)) folds into the SMP-LTD domain. Residues 328–348 (RSKNTREPVGAGKTEKVNGNE) are disordered.

This sequence belongs to the MMM1 family. Homodimer. Component of the ER-mitochondria encounter structure (ERMES) or MDM complex, composed of MMM1, MDM10, MDM12 and MDM34. An MMM1 homodimer associates with one molecule of MDM12 on each side in a pairwise head-to-tail manner, and the SMP-LTD domains of MMM1 and MDM12 generate a continuous hydrophobic tunnel for phospholipid trafficking.

The protein resides in the endoplasmic reticulum membrane. In terms of biological role, component of the ERMES/MDM complex, which serves as a molecular tether to connect the endoplasmic reticulum (ER) and mitochondria. Components of this complex are involved in the control of mitochondrial shape and protein biogenesis, and function in nonvesicular lipid trafficking between the ER and mitochondria. The MDM12-MMM1 subcomplex functions in the major beta-barrel assembly pathway that is responsible for biogenesis of all outer membrane beta-barrel proteins, and acts in a late step after the SAM complex. The MDM10-MDM12-MMM1 subcomplex further acts in the TOM40-specific pathway after the action of the MDM12-MMM1 complex. Essential for establishing and maintaining the structure of mitochondria and maintenance of mtDNA nucleoids. This chain is Maintenance of mitochondrial morphology protein 1, found in Clavispora lusitaniae (strain ATCC 42720) (Yeast).